The following is a 96-amino-acid chain: Putative pterin-4-alpha-carbinolamine dehydratase (96 aa).

The protein belongs to the pterin-4-alpha-carbinolamine dehydratase family.

The enzyme catalyses (4aS,6R)-4a-hydroxy-L-erythro-5,6,7,8-tetrahydrobiopterin = (6R)-L-erythro-6,7-dihydrobiopterin + H2O. This is Putative pterin-4-alpha-carbinolamine dehydratase from Prochlorococcus marinus (strain MIT 9301).